The following is a 451-amino-acid chain: Tubulin alpha-1 chain (451 aa).

Gln11 serves as a coordination point for GTP. N6-acetyllysine is present on Lys40. The GTP site is built by Glu71, Gly144, Thr145, Thr179, Asn206, and Asn228. Glu71 provides a ligand contact to Mg(2+). Glu254 is a catalytic residue. The disordered stretch occupies residues 432 to 451; that stretch reads YEEVGADSAEGDEEDEGDEY.

Belongs to the tubulin family. Dimer of alpha and beta chains. A typical microtubule is a hollow water-filled tube with an outer diameter of 25 nm and an inner diameter of 15 nM. Alpha-beta heterodimers associate head-to-tail to form protofilaments running lengthwise along the microtubule wall with the beta-tubulin subunit facing the microtubule plus end conferring a structural polarity. Microtubules usually have 13 protofilaments but different protofilament numbers can be found in some organisms and specialized cells. The cofactor is Mg(2+). Post-translationally, undergoes a tyrosination/detyrosination cycle, the cyclic removal and re-addition of a C-terminal tyrosine residue by the enzymes tubulin tyrosine carboxypeptidase (TTCP) and tubulin tyrosine ligase (TTL), respectively. Acetylation of alpha chains at Lys-40 stabilizes microtubules and affects affinity and processivity of microtubule motors. This modification has a role in multiple cellular functions, ranging from cell motility, cell cycle progression or cell differentiation to intracellular trafficking and signaling.

The protein resides in the cytoplasm. It is found in the cytoskeleton. It catalyses the reaction GTP + H2O = GDP + phosphate + H(+). In terms of biological role, tubulin is the major constituent of microtubules, a cylinder consisting of laterally associated linear protofilaments composed of alpha- and beta-tubulin heterodimers. Microtubules grow by the addition of GTP-tubulin dimers to the microtubule end, where a stabilizing cap forms. Below the cap, tubulin dimers are in GDP-bound state, owing to GTPase activity of alpha-tubulin. The sequence is that of Tubulin alpha-1 chain from Gossypium hirsutum (Upland cotton).